Consider the following 698-residue polypeptide: Superoxide-generating NADPH oxidase heavy chain subunit B (698 aa).

2 disordered regions span residues 1-68 (MNEK…NITP) and 134-158 (NDQV…NNKN). Residues 1–184 (MNEKKELQQE…KIRGWWWHRG (184 aa)) are Cytoplasmic-facing. 2 stretches are compositionally biased toward polar residues: residues 16 to 25 (FQTPKNQQLE) and 33 to 53 (EISS…PISQ). 2 stretches are compositionally biased toward low complexity: residues 54 to 65 (NDNSNNENESLN) and 138 to 156 (NSNT…TNNN). Residues 185-205 (ISTYIMLFYIALNIGVGVHMF) traverse the membrane as a helical segment. The Extracellular portion of the chain corresponds to 206 to 229 (YNMYHSDIFKFLGLSFCFSRTAAR). A Ferric oxidoreductase domain is found at 225–375 (RTAARLINLN…LFIPFYILLC (151 aa)). Residues 230 to 250 (LINLNSAVILLPVLRNFLSWL) traverse the membrane as a helical segment. Residues 251 to 269 (RGTIVNNYIPIDKHLNFHK) are Cytoplasmic-facing. Heme is bound by residues His268 and His282. A helical transmembrane segment spans residues 270-290 (LCAFMLFCCTIIHCVGHYISF). The Extracellular segment spans residues 291-324 (KKINDDVLKIDDGKSVAGDYLNININNFPDEKYL). The chain crosses the membrane as a helical span at residues 325 to 345 (FFKSVPGITGHIMLLILILIV). Over 346-355 (SSSMWRIRRP) the chain is Cytoplasmic. Residues 356–376 (MFEIFWYVHHLFIPFYILLCF) form a helical membrane-spanning segment. Heme contacts are provided by His364 and His377. At 377-388 (HGYSKILKKDPQ) the chain is on the extracellular side. The helical transmembrane segment at 389-409 (SWMWIIAPFILYSIERLIRIA) threads the bilayer. Positions 404–528 (RLIRIARSKK…DGPFGAPAEN (125 aa)) constitute an FAD-binding FR-type domain. Topologically, residues 410 to 698 (RSKKRVILEK…CHLIFHKENF (289 aa)) are cytoplasmic. An FAD-binding site is contributed by 460 to 466 (HPFTITS).

As to quaternary structure, composed of a heavy chain and a light chain. FAD is required as a cofactor.

It is found in the membrane. Critical component of the membrane-bound oxidase that generates superoxide. It is the terminal component of a respiratory chain that transfers single electrons from cytoplasmic NADPH across the plasma membrane to molecular oxygen on the exterior. This Dictyostelium discoideum (Social amoeba) protein is Superoxide-generating NADPH oxidase heavy chain subunit B (noxB).